The sequence spans 249 residues: Methyltransferase 1 (249 aa).

This sequence belongs to the FkbM methyltransferase family.

The protein operates within secondary metabolite biosynthesis. Functionally, methyltransferase; part of the pathway that mediates the biosynthesis of tenellin-type 2-pyridones, iron-chelating compounds involved in iron stress tolerance, competition with the natural competitor fungus Metarhizium robertsii and insect hosts infection. Methylates pyridovericin-N-O-(beta-D-glucopyranoside) produced by the UDP-glucosyltransferase GT1 to yield pyridovericin-N-O-(4-O-methyl-beta-D-glucopyranoside) (PMGP). The pathway begins with the assembly of the polyketide-amino acid backbone by the hybrid PKS-NRPS tenS with the help of the enoyl reductase tenC. These enzymes catalyze the synthesis of the pyrrolidine-2-dione intermediates pretellinin A, 11-hydropretellenin A, 12-hydropretellenin A, 13-hydropretellenin A, 14-hydropretellenin A, 12-oxopretellenin A and prototellinin D. The cytochrome P450 monooxygenase tenA then catalyzes an oxidative ring expansion of pretenellin A and 14-hydropretellenin A to form the 2-pyridone core, leading to pretenellin B and pyridovericin, respectively. The cytochrome P450 monooxygenase tenB is then required for the selective N-hydroxylation of the 2-pyridone nitrogen of yield tellinin and 15-hydroxytellenin (15-HT), respectively. The UDP-glucosyltransferase GT1 and the methyltransferase MT1, located outside the tenS gene cluster, contribute to the stepwise glycosylation and methylation of 15-HT to obtain the glycoside pyridovericin-N-O-(4-O-methyl-beta-D-glucopyranoside) (PMGP). Additional related compounds such as 1-O-methyl-15-HT, (8Z)-1-O-methyl-15-HT, and O-methyltenellin A are also produced but the enzymes involved in their biosynthesis have still to be determined. This Beauveria bassiana (strain ARSEF 2860) (White muscardine disease fungus) protein is Methyltransferase 1.